We begin with the raw amino-acid sequence, 149 residues long: Large ribosomal subunit protein bL20m (149 aa).

The N-terminal 9 residues, 1–9 (MVFLSAPLW), are a transit peptide targeting the mitochondrion.

Belongs to the bacterial ribosomal protein bL20 family. In terms of assembly, component of the mitochondrial ribosome large subunit (39S) which comprises a 16S rRNA and about 50 distinct proteins. Interacts with OXA1L.

It is found in the mitochondrion. The polypeptide is Large ribosomal subunit protein bL20m (MRPL20) (Bos taurus (Bovine)).